The sequence spans 205 residues: MKVVAFERSVQGTGASRRLRNSGKTPGIIYGGAAEPKMIELDHNALWHALKKEAFHSSILDLEVAGKSEKALLRAFQMHPFKPLVLHVDFQRVSANDKIHVKVPLHFMNQETAPGVKLGHGLVNHIVNDLEVSCLPADLPEFIEVDVGAMELGQTLHLSDLKLPKGVTVITHGDDNPAIASISQPAGAVSEAAEGGEAAGETPAA.

Positions 185–205 are disordered; it reads PAGAVSEAAEGGEAAGETPAA. Positions 186–205 are enriched in low complexity; that stretch reads AGAVSEAAEGGEAAGETPAA.

It belongs to the bacterial ribosomal protein bL25 family. CTC subfamily. In terms of assembly, part of the 50S ribosomal subunit; part of the 5S rRNA/L5/L18/L25 subcomplex. Contacts the 5S rRNA. Binds to the 5S rRNA independently of L5 and L18.

Functionally, this is one of the proteins that binds to the 5S RNA in the ribosome where it forms part of the central protuberance. This chain is Large ribosomal subunit protein bL25, found in Cupriavidus taiwanensis (strain DSM 17343 / BCRC 17206 / CCUG 44338 / CIP 107171 / LMG 19424 / R1) (Ralstonia taiwanensis (strain LMG 19424)).